We begin with the raw amino-acid sequence, 251 residues long: Isopentenyl-diphosphate delta-isomerase (251 aa).

Lysine 49 contacts substrate. Mg(2+) is bound by residues histidine 53 and histidine 66. Residues 64–212 (LLHRAFSVFL…SNSFTPWFKL (149 aa)) form the Nudix hydrolase domain. Residues arginine 86 and lysine 90 each contribute to the substrate site. The active site involves cysteine 102. Substrate is bound at residue serine 103. Positions 162 and 164 each coordinate Mg(2+). Glutamate 164 is an active-site residue.

It belongs to the IPP isomerase type 1 family. Mg(2+) serves as cofactor.

Its subcellular location is the cytoplasm. It catalyses the reaction isopentenyl diphosphate = dimethylallyl diphosphate. The protein operates within isoprenoid biosynthesis; dimethylallyl diphosphate biosynthesis; dimethylallyl diphosphate from isopentenyl diphosphate: step 1/1. Isopentenyl-diphosphate delta-isomerase; part of the second module of ergosterol biosynthesis pathway that includes the middle steps of the pathway. The second module is carried out in the vacuole and involves the formation of farnesyl diphosphate, which is also an important intermediate in the biosynthesis of ubiquinone, dolichol, heme and prenylated proteins. Activity by the mevalonate kinase first converts mevalonate into 5-phosphomevalonate. 5-phosphomevalonate is then further converted to 5-diphosphomevalonate by the phosphomevalonate kinase. The diphosphomevalonate decarboxylase then produces isopentenyl diphosphate. The isopentenyl-diphosphate delta-isomerase then catalyzes the 1,3-allylic rearrangement of the homoallylic substrate isopentenyl (IPP) to its highly electrophilic allylic isomer, dimethylallyl diphosphate (DMAPP). Finally the farnesyl diphosphate synthase catalyzes the sequential condensation of isopentenyl pyrophosphate with dimethylallyl pyrophosphate, and then with the resultant geranylpyrophosphate to the ultimate product farnesyl pyrophosphate. The polypeptide is Isopentenyl-diphosphate delta-isomerase (Phaffia rhodozyma (Yeast)).